The chain runs to 839 residues: Probable inorganic carbon transporter subunit DabA (839 aa).

Zn(2+) is bound by residues Cys-353, Asp-355, His-537, and Cys-552.

Belongs to the inorganic carbon transporter (TC 9.A.2) DabA family. In terms of assembly, forms a complex with DabB. Zn(2+) serves as cofactor.

It localises to the cell membrane. Functionally, part of an energy-coupled inorganic carbon pump. This chain is Probable inorganic carbon transporter subunit DabA, found in Chloroflexus aggregans (strain MD-66 / DSM 9485).